A 569-amino-acid polypeptide reads, in one-letter code: Dicarboxylate transporter 1, chloroplastic (569 aa).

Residues 1 to 93 (MASMALSLTS…VPSPAPVSAP (93 aa)) constitute a chloroplast transit peptide. Over residues 23 to 74 (SLKPLSKSQPSISLPSLRSNASKSPSLSHKHFLSPPSLLLPHKLKPISASSP) the composition is skewed to low complexity. The segment at 23-93 (SLKPLSKSQP…VPSPAPVSAP (71 aa)) is disordered. Residues 75–90 (TNPPPPPAPVPSPAPV) show a composition bias toward pro residues. 12 consecutive transmembrane segments (helical) span residues 106 to 126 (PLLA…PEGV), 134 to 154 (LAIF…LGAV), 172 to 192 (AAFS…FFFA), 241 to 261 (AGGI…SNVG), 268 to 288 (LGAW…SMFL), 317 to 337 (AAFV…YVVY), 367 to 387 (IMAV…KLGV), 388 to 408 (DAVT…VVTW), 423 to 443 (WFAA…ITWF), 450 to 470 (VVGG…LLYF), 490 to 510 (FLSV…VLSF), and 543 to 563 (YGFL…GLWW).

This sequence belongs to the SLC13A/DASS transporter (TC 2.A.47) family. DIT1 subfamily. In terms of assembly, monomer. Post-translationally, the N-terminus is blocked. As to expression, expressed in leaves.

The protein resides in the plastid. Its subcellular location is the chloroplast inner membrane. Functionally, 2-oxoglutarate/malate translocator that transports carbon skeletons into chloroplasts for net glutamate synthesis. This translocator exchanges malate for internal succinate, fumarate and 2-oxoglutarate but not for aspartate and glutamate. Involved with DIT2 in primary ammonia assimilation and in the re-assimilation of ammonia generated by the photorespiratory pathway. Imports 2-oxoglutarate into plastids as precursor for ammonia assimilation. 2-oxoglutarate is converted to glutamate, the end product of ammonia assimilation, which is exported to the cytosol by DIT2. The polypeptide is Dicarboxylate transporter 1, chloroplastic (DIT1) (Spinacia oleracea (Spinach)).